Consider the following 163-residue polypeptide: Probable chemoreceptor glutamine deamidase CheD (163 aa).

Belongs to the CheD family.

The enzyme catalyses L-glutaminyl-[protein] + H2O = L-glutamyl-[protein] + NH4(+). Probably deamidates glutamine residues to glutamate on methyl-accepting chemotaxis receptors (MCPs), playing an important role in chemotaxis. The sequence is that of Probable chemoreceptor glutamine deamidase CheD from Borreliella afzelii (strain PKo) (Borrelia afzelii).